Here is a 406-residue protein sequence, read N- to C-terminus: NIPA-like protein 3 (406 aa).

4 helical membrane-spanning segments follow: residues N33–L53, W76–F96, L101–I121, and I135–A155. N166 carries N-linked (GlcNAc...) asparagine glycosylation. Helical transmembrane passes span L171–L191, I202–A222, P240–L260, L271–F291, and V300–I320. The residue at position 372 (S372) is a Phosphoserine.

Belongs to the NIPA family.

The protein resides in the membrane. This chain is NIPA-like protein 3 (NIPAL3), found in Pongo abelii (Sumatran orangutan).